Consider the following 330-residue polypeptide: Small ribosomal subunit protein uS2 (330 aa).

This sequence belongs to the universal ribosomal protein uS2 family.

The sequence is that of Small ribosomal subunit protein uS2 from Rhodopseudomonas palustris (strain BisA53).